A 347-amino-acid polypeptide reads, in one-letter code: Intracellular hyaluronan-binding protein 4 (347 aa).

Disordered stretches follow at residues Gly39–Thr221 and Phe298–Ala347. 4 stretches are compositionally biased toward basic and acidic residues: residues Val61–Thr71, Pro83–Lys107, Arg116–Ala125, and Asp146–Ser174. A compositionally biased stretch (acidic residues) spans Glu199–Asp213. The segment covering Gly307 to Gly319 has biased composition (gly residues). A compositionally biased stretch (acidic residues) spans Asp338 to Ala347.

This sequence belongs to the SERBP1-HABP4 family. In terms of assembly, associates with ribosomes; promoting ribosome stabilization. Interacts with eef2/eEF2; promoting ribosome stabilization.

It localises to the nucleus. The protein resides in the cytoplasm. It is found in the stress granule. Its subcellular location is the nucleolus. The protein localises to the nucleus speckle. It localises to the cajal body. Its function is as follows. Ribosome-binding protein that promotes ribosome hibernation, a process during which ribosomes are stabilized in an inactive state and preserved from proteasomal degradation. Acts via its association with eef2/eEF2 factor at the A-site of the ribosome, promoting ribosome stabilization in an inactive state compatible with storage. Plays a key role in ribosome hibernation in the mature egg by promoting ribosome stabilization. Ribosomes, which are produced in large quantities during oogenesis, are stored and translationally repressed in the egg and early embryo. The protein is Intracellular hyaluronan-binding protein 4 of Danio rerio (Zebrafish).